A 418-amino-acid polypeptide reads, in one-letter code: Glutamyl-tRNA reductase (418 aa).

Substrate is bound by residues 49 to 52, S107, 112 to 114, and Q118; these read TCNR and EPQ. C50 acts as the Nucleophile in catalysis. Residue 187 to 192 participates in NADP(+) binding; that stretch reads GAGETI.

It belongs to the glutamyl-tRNA reductase family. Homodimer.

The catalysed reaction is (S)-4-amino-5-oxopentanoate + tRNA(Glu) + NADP(+) = L-glutamyl-tRNA(Glu) + NADPH + H(+). It participates in porphyrin-containing compound metabolism; protoporphyrin-IX biosynthesis; 5-aminolevulinate from L-glutamyl-tRNA(Glu): step 1/2. Functionally, catalyzes the NADPH-dependent reduction of glutamyl-tRNA(Glu) to glutamate 1-semialdehyde (GSA). This chain is Glutamyl-tRNA reductase, found in Vibrio parahaemolyticus serotype O3:K6 (strain RIMD 2210633).